The primary structure comprises 486 residues: Cytosol aminopeptidase (486 aa).

Residues Lys-249 and Asp-254 each coordinate Zn(2+). The active site involves Lys-261. Asp-272, Asp-331, and Glu-333 together coordinate Zn(2+). Arg-335 is a catalytic residue.

Belongs to the peptidase M17 family. Homohexamer. The cofactor is Zn(2+).

The protein localises to the cytoplasm. The catalysed reaction is Release of an N-terminal amino acid, Xaa-|-Yaa-, in which Xaa is preferably Leu, but may be other amino acids including Pro although not Arg or Lys, and Yaa may be Pro. Amino acid amides and methyl esters are also readily hydrolyzed, but rates on arylamides are exceedingly low.. The enzyme catalyses Release of N-terminal proline from a peptide.. Its function is as follows. Presumably involved in the processing and regular turnover of intracellular proteins. Catalyzes the removal of unsubstituted N-terminal amino acids from various peptides. This Encephalitozoon cuniculi (strain GB-M1) (Microsporidian parasite) protein is Cytosol aminopeptidase.